Here is a 138-residue protein sequence, read N- to C-terminus: MASSFITVPKPFLSFPIKTNAPTLPQQTLLGIRRNSFRINAVSTKWEPAKVVPQADRVLVRLEVLPEKSSGGVLLPKSAVKFERYLTGEVVSVGSEVGEVEPGKKVLFSDMSAYEVDFGTEDAKHCFCKESDLLAIVQ.

Residues 1–61 (MASSFITVPK…VPQADRVLVR (61 aa)) constitute a chloroplast transit peptide. Residues 50–137 (KVVPQADRVL…CKESDLLAIV (88 aa)) are cpn-10 domain.

Belongs to the GroES chaperonin family. Expressed at low levels in germinating seeds, seedlings, rosettes leaves, flowers and siliques.

It localises to the plastid. Its subcellular location is the chloroplast. Functionally, functions as a co-chaperone for protein folding in chloroplasts. The chain is 10 kDa chaperonin 1, chloroplastic from Arabidopsis thaliana (Mouse-ear cress).